The chain runs to 544 residues: MSIFIGGAWPYANGSLHLGHIASLLPGDILARYYRAKGENVLYVSGSDCNGTPIAIRAKQEGVTAKDIADQYHEEFERCFRSLGFTYDCYTRTDSEHHHETVQNVFLRLLEEGHIYKKTVEQAYCETCTQFLPDRYVEGICPHCHEAARGDQCDACSAILDPLDLLEKKCKLCGSTPSVQETEHFYFALHTFQEQIKTAVENVKQTGTWRDNAIQLTERYVKEGLQDRAVSRDLPIGVPIPVEGYEDKKIYVWIEAVTGYYSASKHWAEKTGEDDQEFWDSEAKTYYVHGKDNIPFHSVIWPAVLLGIGEGAIPRHIVSNEYLTVEKRKLSTSKNWAVWVPDILERYDPDSIRYFLTVNAPENRDTDFSWREFLYSHNSELLGAYGNFVNRTLKFIEKYYGGIVPKGSIDVELKDKVEGLYKHVGEAIEQTKFKVALESIFDAVRFANKYFDEKQPWKQREDNPVSCEETIYNCVYLIANFVNLLEPFLPFSSERIRNTLSIVNRNWEPQHTLPSRIDSVQPLFERIDVKQIEHEVEKLYGAVK.

Residues 10-20 (PYANGSLHLGH) carry the 'HIGH' region motif. Zn(2+) contacts are provided by cysteine 141, cysteine 144, cysteine 153, and cysteine 156. Positions 329–333 (KLSTS) match the 'KMSKS' region motif. Threonine 332 is a binding site for ATP.

Belongs to the class-I aminoacyl-tRNA synthetase family. MetG type 1 subfamily. In terms of assembly, monomer. It depends on Zn(2+) as a cofactor.

The protein resides in the cytoplasm. The enzyme catalyses tRNA(Met) + L-methionine + ATP = L-methionyl-tRNA(Met) + AMP + diphosphate. In terms of biological role, is required not only for elongation of protein synthesis but also for the initiation of all mRNA translation through initiator tRNA(fMet) aminoacylation. This is Methionine--tRNA ligase from Bacillus cereus (strain AH187).